We begin with the raw amino-acid sequence, 461 residues long: Mannan endo-1,4-beta-mannosidase 4 (461 aa).

Substrate is bound by residues tryptophan 80 and asparagine 195. Glutamate 196 functions as the Proton donor in the catalytic mechanism. Substrate is bound at residue tyrosine 274. Glutamate 314 serves as the catalytic Nucleophile. Residues tryptophan 357 and aspartate 364 each coordinate substrate.

It belongs to the glycosyl hydrolase 5 (cellulase A) family. Ubiquitous.

The catalysed reaction is Random hydrolysis of (1-&gt;4)-beta-D-mannosidic linkages in mannans, galactomannans and glucomannans.. The polypeptide is Mannan endo-1,4-beta-mannosidase 4 (MAN4) (Oryza sativa subsp. japonica (Rice)).